The sequence spans 100 residues: Putative membrane protein insertion efficiency factor (100 aa).

The disordered stretch occupies residues 73 to 100 (DPVPDLPGSAPEENGRPSPDGQHSGSGG).

Belongs to the UPF0161 family.

The protein localises to the cell inner membrane. Functionally, could be involved in insertion of integral membrane proteins into the membrane. This chain is Putative membrane protein insertion efficiency factor, found in Synechococcus sp. (strain JA-3-3Ab) (Cyanobacteria bacterium Yellowstone A-Prime).